Consider the following 143-residue polypeptide: Endoribonuclease YbeY (143 aa).

The Zn(2+) site is built by His-109, His-113, and His-119.

This sequence belongs to the endoribonuclease YbeY family. The cofactor is Zn(2+).

Its subcellular location is the cytoplasm. Its function is as follows. Single strand-specific metallo-endoribonuclease involved in late-stage 70S ribosome quality control and in maturation of the 3' terminus of the 16S rRNA. This chain is Endoribonuclease YbeY, found in Carboxydothermus hydrogenoformans (strain ATCC BAA-161 / DSM 6008 / Z-2901).